The chain runs to 225 residues: ATP-dependent dethiobiotin synthetase BioD (225 aa).

12–17 contributes to the ATP binding site; that stretch reads GVGKTV. Threonine 16 is a binding site for Mg(2+). Lysine 37 is a catalytic residue. Position 41 (threonine 41) interacts with substrate. ATP-binding positions include aspartate 49, 108–111, and 197–199; these read EGAG and PAG. Residues aspartate 49 and glutamate 108 each coordinate Mg(2+).

The protein belongs to the dethiobiotin synthetase family. In terms of assembly, homodimer. Mg(2+) serves as cofactor.

It is found in the cytoplasm. It carries out the reaction (7R,8S)-7,8-diammoniononanoate + CO2 + ATP = (4R,5S)-dethiobiotin + ADP + phosphate + 3 H(+). Its pathway is cofactor biosynthesis; biotin biosynthesis; biotin from 7,8-diaminononanoate: step 1/2. Catalyzes a mechanistically unusual reaction, the ATP-dependent insertion of CO2 between the N7 and N8 nitrogen atoms of 7,8-diaminopelargonic acid (DAPA, also called 7,8-diammoniononanoate) to form a ureido ring. The chain is ATP-dependent dethiobiotin synthetase BioD from Mycolicibacterium smegmatis (strain ATCC 700084 / mc(2)155) (Mycobacterium smegmatis).